We begin with the raw amino-acid sequence, 134 residues long: Small ribosomal subunit protein bS6 (134 aa).

Belongs to the bacterial ribosomal protein bS6 family.

In terms of biological role, binds together with bS18 to 16S ribosomal RNA. The polypeptide is Small ribosomal subunit protein bS6 (Chlorobium phaeobacteroides (strain BS1)).